Reading from the N-terminus, the 432-residue chain is Adenosylhomocysteinase (432 aa).

Positions 56, 131, and 156 each coordinate substrate. 157–159 (TTT) provides a ligand contact to NAD(+). Substrate contacts are provided by Lys186 and Asp190. NAD(+)-binding positions include 222 to 227 (GDVGKG), Glu243, Asn248, 299 to 301 (IGH), Asn346, His353, Lys426, 426 to 430 (KPDHY), and Tyr430.

This sequence belongs to the adenosylhomocysteinase family. In terms of assembly, interacts with AhcyL1; the interaction may negatively regulate Ahcy catalytic activity. Requires NAD(+) as cofactor.

It carries out the reaction S-adenosyl-L-homocysteine + H2O = L-homocysteine + adenosine. It participates in amino-acid biosynthesis; L-homocysteine biosynthesis; L-homocysteine from S-adenosyl-L-homocysteine: step 1/1. Functionally, adenosylhomocysteine is a competitive inhibitor of S-adenosyl-L-methionine-dependent methyl transferase reactions; therefore adenosylhomocysteinase may play a key role in the control of methylations via regulation of the intracellular concentration of adenosylhomocysteine. This Drosophila melanogaster (Fruit fly) protein is Adenosylhomocysteinase.